The primary structure comprises 822 residues: Pentatricopeptide repeat-containing protein At2g41720 (822 aa).

The interval 1–28 (MATVTNFKLVTPPESSRADKPGATKASD) is disordered. PPR repeat units follow at residues 106 to 136 (ARKN…MKIQ), 142 to 176 (RNDI…SCKP), 177 to 211 (DAET…AIAP), 212 to 246 (SRST…GVGP), 247 to 281 (DLVT…KVRP), 282 to 316 (DTTT…RAEC), 319 to 353 (DVVT…GLKP), 354 to 388 (NIVS…GIIP), 389 to 423 (DVVS…RRKP), 424 to 458 (NVVT…GIKP), 459 to 493 (NVVS…GINL), 494 to 528 (NTAA…KVKA), 529 to 563 (DSVT…SIPL), 564 to 598 (TKEV…GCEP), 599 to 633 (DVIA…GIEP), 634 to 668 (DSIA…EIPF), 669 to 699 (TGAV…MDPY), 704 to 738 (SIGL…GVGI), and 739 to 773 (NLKT…GIQP).

This sequence belongs to the PPR family. P subfamily.

The chain is Pentatricopeptide repeat-containing protein At2g41720 (EMB2654) from Arabidopsis thaliana (Mouse-ear cress).